The sequence spans 196 residues: Probable calcium-binding protein CML32 (196 aa).

3 EF-hand domains span residues leucine 30 to valine 65, aspartate 121 to proline 156, and glycine 159 to tryptophan 194. The Ca(2+) site is built by aspartate 43, asparagine 45, aspartate 47, glutamate 49, glutamate 54, aspartate 134, aspartate 136, aspartate 138, glutamate 145, aspartate 172, asparagine 174, aspartate 176, arginine 178, and glutamate 183.

Potential calcium sensor. This is Probable calcium-binding protein CML32 (CML32) from Oryza sativa subsp. japonica (Rice).